The chain runs to 89 residues: Small ribosomal subunit protein uS15 (89 aa).

Over residues 1-16 the composition is skewed to basic and acidic residues; it reads MSVADIKKQDIVKDNG. The tract at residues 1–24 is disordered; the sequence is MSVADIKKQDIVKDNGRSANDTGS.

It belongs to the universal ribosomal protein uS15 family. Part of the 30S ribosomal subunit. Forms a bridge to the 50S subunit in the 70S ribosome, contacting the 23S rRNA.

Its function is as follows. One of the primary rRNA binding proteins, it binds directly to 16S rRNA where it helps nucleate assembly of the platform of the 30S subunit by binding and bridging several RNA helices of the 16S rRNA. Functionally, forms an intersubunit bridge (bridge B4) with the 23S rRNA of the 50S subunit in the ribosome. In Ralstonia pickettii (strain 12J), this protein is Small ribosomal subunit protein uS15.